We begin with the raw amino-acid sequence, 480 residues long: MELPSNLLPDEASPEWMNKGDNAWQLTAATMVGLQSIPGLVILYGSLVKKTWAINSAFMAFYAFASVLLCWVSWAYQMSFGEKMVFFLGKPNVALDEKFLLGKAFLGNFPNATMVFYQGVFAGLTLILIAGALLGRMNIRAWMLFVPLWVTFSYTVVAFSIWCPDGWLAKRGVIDFAGGYVIHLSAGVAGFTAAYWVGPRADKDRETFPAATNNMIMVLAGAGLLWMGWSGFNGGAPFVASTIASLAILNTHVCTAASITVWVMLDTFYFGKPTVFGAVQGMITGLVCITPAAGVVQGWAAILMGFISGSIPWYTMMVLHNKVNFLKKIDDPMAVFHTHAIAGALGGILTGFFAVPKLCRLFYMVPDWEKYIGLAYGLQNKGATQAGLKQMVIQIEAIVFVICYNVLMTSLICLIVRVIVPLRLNGDALQMGDKAIHGEDAFALHSEATKFVNIKRNQVYDTQDFSSIPESRSLGELQMV.

At 1-27 the chain is on the extracellular side; it reads MELPSNLLPDEASPEWMNKGDNAWQLT. A helical transmembrane segment spans residues 28-48; that stretch reads AATMVGLQSIPGLVILYGSLV. The Cytoplasmic portion of the chain corresponds to 49–51; that stretch reads KKT. A helical membrane pass occupies residues 52–72; it reads WAINSAFMAFYAFASVLLCWV. Residues 73–113 are Extracellular-facing; the sequence is SWAYQMSFGEKMVFFLGKPNVALDEKFLLGKAFLGNFPNAT. Asn-111 is a glycosylation site (N-linked (GlcNAc...) asparagine). Residues 114-134 form a helical membrane-spanning segment; that stretch reads MVFYQGVFAGLTLILIAGALL. Residues 135–141 are Cytoplasmic-facing; sequence GRMNIRA. Residues 142 to 162 traverse the membrane as a helical segment; sequence WMLFVPLWVTFSYTVVAFSIW. Over 163–175 the chain is Extracellular; sequence CPDGWLAKRGVID. A helical transmembrane segment spans residues 176 to 196; that stretch reads FAGGYVIHLSAGVAGFTAAYW. Over 197-214 the chain is Cytoplasmic; it reads VGPRADKDRETFPAATNN. The chain crosses the membrane as a helical span at residues 215–235; that stretch reads MIMVLAGAGLLWMGWSGFNGG. The Extracellular segment spans residues 236 to 242; it reads APFVAST. Residues 243–263 traverse the membrane as a helical segment; that stretch reads IASLAILNTHVCTAASITVWV. Residues 264–274 are Cytoplasmic-facing; the sequence is MLDTFYFGKPT. A helical transmembrane segment spans residues 275–295; it reads VFGAVQGMITGLVCITPAAGV. Residues 296–298 lie on the Extracellular side of the membrane; the sequence is VQG. A helical transmembrane segment spans residues 299 to 319; the sequence is WAAILMGFISGSIPWYTMMVL. Residues 320–334 lie on the Cytoplasmic side of the membrane; sequence HNKVNFLKKIDDPMA. The helical transmembrane segment at 335–355 threads the bilayer; it reads VFHTHAIAGALGGILTGFFAV. Residues 356–394 are Extracellular-facing; the sequence is PKLCRLFYMVPDWEKYIGLAYGLQNKGATQAGLKQMVIQ. The chain crosses the membrane as a helical span at residues 395–415; that stretch reads IEAIVFVICYNVLMTSLICLI. The Cytoplasmic segment spans residues 416–480; that stretch reads VRVIVPLRLN…SRSLGELQMV (65 aa).

This sequence belongs to the ammonia transporter channel (TC 1.A.11.2) family.

The protein resides in the cell membrane. Its function is as follows. Involved in ammonium transport. May be involved in arbuscular mycorrhizal (AM) symbiosis with AM fungi. The chain is Ammonium transporter 2 member 4 from Medicago truncatula (Barrel medic).